Reading from the N-terminus, the 337-residue chain is DNA-directed RNA polymerase subunit alpha (337 aa).

Residues 1–233 (MVREEVTIST…NLFIPFLHAE (233 aa)) are alpha N-terminal domain (alpha-NTD). Positions 266–337 (GIALKCIFID…FAMNLPKDFF (72 aa)) are alpha C-terminal domain (alpha-CTD).

Belongs to the RNA polymerase alpha chain family. In terms of assembly, in plastids the minimal PEP RNA polymerase catalytic core is composed of four subunits: alpha, beta, beta', and beta''. When a (nuclear-encoded) sigma factor is associated with the core the holoenzyme is formed, which can initiate transcription.

It localises to the plastid. It is found in the chloroplast. The enzyme catalyses RNA(n) + a ribonucleoside 5'-triphosphate = RNA(n+1) + diphosphate. Its function is as follows. DNA-dependent RNA polymerase catalyzes the transcription of DNA into RNA using the four ribonucleoside triphosphates as substrates. The chain is DNA-directed RNA polymerase subunit alpha from Ceratophyllum demersum (Rigid hornwort).